A 260-amino-acid polypeptide reads, in one-letter code: Dehydrogenase/reductase SDR family member 4 (260 aa).

NADP(+) is bound at residue isoleucine 14–valine 38. Substrate is bound at residue serine 148. Residue tyrosine 161 is the Proton acceptor of the active site. An NADP(+)-binding site is contributed by lysine 165.

This sequence belongs to the short-chain dehydrogenases/reductases (SDR) family.

It catalyses the reaction a secondary alcohol + NADP(+) = a ketone + NADPH + H(+). In terms of biological role, catalyzes the reduction of isatin, 4-oxonon-2-enal, 9,10-phenanthrenequinone, menadione, 2,3-hexaenadione, 3,4-hexanedione and 2,3-heptanedione. The protein is Dehydrogenase/reductase SDR family member 4 of Caenorhabditis elegans.